A 250-amino-acid polypeptide reads, in one-letter code: Uridylate kinase (250 aa).

Residue 17-20 (KLSG) participates in ATP binding. Residue glycine 59 coordinates UMP. ATP contacts are provided by glycine 60 and arginine 64. Residues aspartate 79 and 140 to 147 (TGNPYFTT) contribute to the UMP site. The ATP site is built by threonine 167, tyrosine 173, and aspartate 176.

The protein belongs to the UMP kinase family. As to quaternary structure, homohexamer.

The protein localises to the cytoplasm. It catalyses the reaction UMP + ATP = UDP + ADP. It functions in the pathway pyrimidine metabolism; CTP biosynthesis via de novo pathway; UDP from UMP (UMPK route): step 1/1. Inhibited by UTP. In terms of biological role, catalyzes the reversible phosphorylation of UMP to UDP. The protein is Uridylate kinase of Myxococcus xanthus (strain DK1622).